The chain runs to 83 residues: Apolipoprotein C-I, basic form (83 aa).

The N-terminal stretch at 1 to 26 (MRLFLSLPVLVVVLSIVLEGPAPAQG) is a signal peptide.

It belongs to the apolipoprotein C1 family.

The protein resides in the secreted. Functionally, inhibitor of lipoprotein binding to the low density lipoprotein (LDL) receptor, LDL receptor-related protein, and very low density lipoprotein (VLDL) receptor. Associates with high density lipoproteins (HDL) and the triacylglycerol-rich lipoproteins in the plasma and makes up about 10% of the protein of the VLDL and 2% of that of HDL. Appears to interfere directly with fatty acid uptake and is also the major plasma inhibitor of cholesteryl ester transfer protein (CETP). Binds free fatty acids and reduces their intracellular esterification. Modulates the interaction of APOE with beta-migrating VLDL and inhibits binding of beta-VLDL to the LDL receptor-related protein. This is Apolipoprotein C-I, basic form (APOC1B) from Pan troglodytes (Chimpanzee).